Reading from the N-terminus, the 252-residue chain is Carbohydrate deacetylase (252 aa).

Positions 59 and 122 each coordinate Mg(2+).

The protein belongs to the YdjC deacetylase family. Homodimer. The cofactor is Mg(2+).

Functionally, probably catalyzes the deacetylation of acetylated carbohydrates an important step in the degradation of oligosaccharides. In Vibrio vulnificus (strain CMCP6), this protein is Carbohydrate deacetylase.